A 201-amino-acid polypeptide reads, in one-letter code: Dephospho-CoA kinase (201 aa).

One can recognise a DPCK domain in the interval 4 to 201 (IIGITGGIAS…LEGGRQDDRD (198 aa)). Residue 12–17 (ASGKST) participates in ATP binding.

This sequence belongs to the CoaE family.

The protein localises to the cytoplasm. It catalyses the reaction 3'-dephospho-CoA + ATP = ADP + CoA + H(+). Its pathway is cofactor biosynthesis; coenzyme A biosynthesis; CoA from (R)-pantothenate: step 5/5. Functionally, catalyzes the phosphorylation of the 3'-hydroxyl group of dephosphocoenzyme A to form coenzyme A. This chain is Dephospho-CoA kinase, found in Streptococcus pneumoniae (strain ATCC BAA-255 / R6).